Reading from the N-terminus, the 426-residue chain is Serine--tRNA ligase (426 aa).

229-231 (TAE) contributes to the L-serine binding site. Position 260–262 (260–262 (RSE)) interacts with ATP. Glu-283 is an L-serine binding site. 347-350 (EIAS) contacts ATP. Ser-383 provides a ligand contact to L-serine.

It belongs to the class-II aminoacyl-tRNA synthetase family. Type-1 seryl-tRNA synthetase subfamily. Homodimer. The tRNA molecule binds across the dimer.

It localises to the cytoplasm. It carries out the reaction tRNA(Ser) + L-serine + ATP = L-seryl-tRNA(Ser) + AMP + diphosphate + H(+). It catalyses the reaction tRNA(Sec) + L-serine + ATP = L-seryl-tRNA(Sec) + AMP + diphosphate + H(+). Its pathway is aminoacyl-tRNA biosynthesis; selenocysteinyl-tRNA(Sec) biosynthesis; L-seryl-tRNA(Sec) from L-serine and tRNA(Sec): step 1/1. Functionally, catalyzes the attachment of serine to tRNA(Ser). Is also able to aminoacylate tRNA(Sec) with serine, to form the misacylated tRNA L-seryl-tRNA(Sec), which will be further converted into selenocysteinyl-tRNA(Sec). This is Serine--tRNA ligase from Rickettsia bellii (strain OSU 85-389).